A 352-amino-acid chain; its full sequence is Biotin synthase (352 aa).

The Radical SAM core domain maps to Asn44–Lys262. Residues Cys59, Cys63, and Cys66 each contribute to the [4Fe-4S] cluster site. [2Fe-2S] cluster contacts are provided by Cys103, Cys134, Cys194, and Arg266.

This sequence belongs to the radical SAM superfamily. Biotin synthase family. In terms of assembly, homodimer. Requires [4Fe-4S] cluster as cofactor. The cofactor is [2Fe-2S] cluster.

It catalyses the reaction (4R,5S)-dethiobiotin + (sulfur carrier)-SH + 2 reduced [2Fe-2S]-[ferredoxin] + 2 S-adenosyl-L-methionine = (sulfur carrier)-H + biotin + 2 5'-deoxyadenosine + 2 L-methionine + 2 oxidized [2Fe-2S]-[ferredoxin]. It functions in the pathway cofactor biosynthesis; biotin biosynthesis; biotin from 7,8-diaminononanoate: step 2/2. Catalyzes the conversion of dethiobiotin (DTB) to biotin by the insertion of a sulfur atom into dethiobiotin via a radical-based mechanism. The protein is Biotin synthase of Pseudomonas putida (strain ATCC 47054 / DSM 6125 / CFBP 8728 / NCIMB 11950 / KT2440).